The primary structure comprises 194 residues: 7-methyl-GTP pyrophosphatase (194 aa).

Asp69 acts as the Proton acceptor in catalysis.

This sequence belongs to the Maf family. YceF subfamily. It depends on a divalent metal cation as a cofactor.

The protein localises to the cytoplasm. It carries out the reaction N(7)-methyl-GTP + H2O = N(7)-methyl-GMP + diphosphate + H(+). Functionally, nucleoside triphosphate pyrophosphatase that hydrolyzes 7-methyl-GTP (m(7)GTP). May have a dual role in cell division arrest and in preventing the incorporation of modified nucleotides into cellular nucleic acids. This Sodalis glossinidius (strain morsitans) protein is 7-methyl-GTP pyrophosphatase.